The following is an 858-amino-acid chain: MGDHLDLLLGVVLMAGPVFGIPSCSFDGRIAFYRFCNLTQVPQVLNTTERLLLSFNYIRTVTASSFPFLEQLQLLELGSQYTPLTIDKEAFRNLPNLRILDLGSSKIYFLHPDAFQGLFHLFELRLYFCGLSDAVLKDGYFRNLKALTRLDLSKNQIRSLYLHPSFGKLNSLKSIDFSSNQIFLVCEHELEPLQGKTLSFFSLAANSLYSRVSVDWGKCMNPFRNMVLEILDVSGNGWTVDITGNFSNAISKSQAFSLILAHHIMGAGFGFHNIKDPDQNTFAGLARSSVRHLDLSHGFVFSLNSRVFETLKDLKVLNLAYNKINKIADEAFYGLDNLQVLNLSYNLLGELYSSNFYGLPKVAYIDLQKNHIAIIQDQTFKFLEKLQTLDLRDNALTTIHFIPSIPDIFLSGNKLVTLPKINLTANLIHLSENRLENLDILYFLLRVPHLQILILNQNRFSSCSGDQTPSENPSLEQLFLGENMLQLAWETELCWDVFEGLSHLQVLYLNHNYLNSLPPGVFSHLTALRGLSLNSNRLTVLSHNDLPANLEILDISRNQLLAPNPDVFVSLSVLDITHNKFICECELSTFINWLNHTNVTIAGPPADIYCVYPDSFSGVSLFSLSTEGCDEEEVLKSLKFSLFIVCTVTLTLFLMTILTVTKFRGFCFICYKTAQRLVFKDHPQGTEPDMYKYDAYLCFSSKDFTWVQNALLKHLDTQYSDQNRFNLCFEERDFVPGENRIANIQDAIWNSRKIVCLVSRHFLRDGWCLEAFSYAQGRCLSDLNSALIMVVVGSLSQYQLMKHQSIRGFVQKQQYLRWPEDLQDVGWFLHKLSQQILKKEKEKKKDNNIPLQTVATIS.

Positions 1 to 20 (MGDHLDLLLGVVLMAGPVFG) are cleaved as a signal peptide. The Extracellular segment spans residues 21–639 (IPSCSFDGRI…DEEEVLKSLK (619 aa)). Residues Asn37 and Asn46 are each glycosylated (N-linked (GlcNAc...) asparagine). LRR repeat units follow at residues 45-68 (LNTT…SFPF), 71-93 (QLQL…AFRN), 95-117 (PNLR…AFQG), 120-143 (HLFE…YFRN), 146-166 (ALTR…HPSF), 171-192 (SLKS…ELEP), 197-211 (TLSF…LYSR), 214-229 (VDWG…MVLE), and 234-235 (SG). Asn245 carries an N-linked (GlcNAc...) asparagine glycan. 11 LRR repeats span residues 260 to 284 (LAHH…TFAG), 289 to 301 (SVRH…GFVF), 313 to 334 (DLKV…AFYG), 337 to 355 (NLQV…YSSN), 385 to 401 (KLQT…TIHF), 412 to 431 (GNKL…IHLS), 449 to 470 (HLQI…QTPS), 474 to 495 (SLEQ…ELCW), 503 to 524 (HLQV…VFSH), 527 to 546 (ALRG…HNDL), and 549 to 567 (NLEI…NPDV). Asn342 carries an N-linked (GlcNAc...) asparagine glycan. Asn422 carries an N-linked (GlcNAc...) asparagine glycan. The region spanning 579-631 (NKFICECELSTFINWLNHTNVTIAGPPADIYCVYPDSFSGVSLFSLSTEGCDE) is the LRRCT domain. 2 disulfide bridges follow: Cys583-Cys610 and Cys585-Cys629. N-linked (GlcNAc...) asparagine glycosylation is found at Asn595 and Asn598. Residues 640–660 (FSLFIVCTVTLTLFLMTILTV) form a helical membrane-spanning segment. Over 661–858 (TKFRGFCFIC…IPLQTVATIS (198 aa)) the chain is Cytoplasmic. A TIR domain is found at 691 to 836 (YKYDAYLCFS…WFLHKLSQQI (146 aa)). Position 798 is a phosphotyrosine (Tyr798). Phosphoserine; by PKD/PRKD1 is present on Ser805.

This sequence belongs to the Toll-like receptor family. Homodimer. Interacts with MYD88 (via TIR domain). Interacts with TICAM1 (via TIR domain). Interacts with UNC93B1; this interaction is essential for proper TLR5 localization to the plasma membrane. Post-translationally, phosphorylated at Ser-805 by PKD/PRKD1; phosphorylation induces the production of inflammatory cytokines. In terms of processing, phosphorylated at Tyr-798 upon flagellin binding; required for signaling. In terms of tissue distribution, highly expressed on the basolateral surface of intestinal epithelia. Expressed also in other cells such as lung epithelial cells.

Its subcellular location is the cell membrane. Its function is as follows. Pattern recognition receptor (PRR) located on the cell surface that participates in the activation of innate immunity and inflammatory response. Recognizes small molecular motifs named pathogen-associated molecular pattern (PAMPs) expressed by pathogens and microbe-associated molecular patterns (MAMPs) usually expressed by resident microbiota. Upon ligand binding such as bacterial flagellins, recruits intracellular adapter proteins MYD88 and TRIF leading to NF-kappa-B activation, cytokine secretion and induction of the inflammatory response. Plays thereby an important role in the relationship between the intestinal epithelium and enteric microbes and contributes to the gut microbiota composition throughout life. In Homo sapiens (Human), this protein is Toll-like receptor 5 (TLR5).